We begin with the raw amino-acid sequence, 347 residues long: MSQQYTLPVTLPPALSQEPLKPVSPPADTQQEQVKQATPLPAPCQKMLSELPVEVPLEDAEKHTTLVKGVPEQECEPQPQEPQQQELHVEQQQQQQESQVQELHVDQQQQQQESQEQELHVDQQQQQQESQEQELHVDQQQQQESQVQELHVGHHQQQQESQEQELHVDHHQQQQESQEQELHVDQQQQQQESQEQELHVDQQQQQQESQEQELHVDHHQQQQESQVQELHVDHQQQQQESQEQELHVDQHQQQQESQEQELHVDQQQQELQVQEVQQQQQQQQEQQEDHQKAEHLEQEEAQREQQLKGQLEQEKKGVYQHLDQELTKRDEHLEKKGEHCWSSRRSL.

Disordered regions lie at residues 1–43 (MSQQ…LPAP) and 56–347 (PLED…RRSL). Positions 27–36 (ADTQQEQVKQ) are enriched in polar residues. 2 stretches are compositionally biased toward low complexity: residues 70 to 114 (VPEQ…QQES) and 138 to 161 (DQQQ…QQES). Composition is skewed to basic and acidic residues over residues 164-173 (QELHVDHHQQ) and 212-221 (QELHVDHHQQ). Composition is skewed to low complexity over residues 222 to 241 (QQES…QQES) and 265 to 285 (DQQQ…QQQE). A compositionally biased stretch (basic and acidic residues) spans 287–341 (QEDHQKAEHLEQEEAQREQQLKGQLEQEKKGVYQHLDQELTKRDEHLEKKGEHCW).

This sequence belongs to the involucrin family. In terms of assembly, directly or indirectly cross-linked to cornifelin (CNFN). In terms of processing, substrate of transglutaminase. Specific glutamines or lysines are cross-linked to keratins, desmoplakin and to inter involucrin molecules. As to expression, keratinocytes of epidermis and other stratified squamous epithelia.

The protein localises to the cytoplasm. Part of the insoluble cornified cell envelope (CE) of stratified squamous epithelia. In Sus scrofa (Pig), this protein is Involucrin (IVL).